Here is a 396-residue protein sequence, read N- to C-terminus: MWNASDVNFSCYHESVLGYRYVAVSWGIVVAVTGTVGNVLTLLALAIQPKLRTRFNLLIANLTVADLLYCTLLQPFSVDTYLHLHWRTGATFCQIFGFLLFVSNSVSILTLCLIALGRYLLIAHPKLFPQVFSAKGIVLALVSTWVVAVASFAPLWPIYILVPVVCTCSFDRIRGQPYTTILMGIYFVVGLSSVGVFYCLIHQQVKRAAQAMNQYKLRQASIRSNHVAGAHEAVPGRFQELDSGLASGGPSEGISSEPVSAATTQTLEGDSSEVRDQSNSKAAKQMAEKNPPGVAAKARTTKGAQRAQDSPSEFGKVTRMCFAVFLCFTLSYIPFLLLNILDAKVQAPRVVHMLAANLTWLNGCINPVLYAAMNRQFRQAYGSLLRRGPQSFHRFH.

Over 1–26 (MWNASDVNFSCYHESVLGYRYVAVSW) the chain is Extracellular. N-linked (GlcNAc...) asparagine glycans are attached at residues asparagine 3 and asparagine 8. A helical membrane pass occupies residues 27-47 (GIVVAVTGTVGNVLTLLALAI). Over 48–57 (QPKLRTRFNL) the chain is Cytoplasmic. The chain crosses the membrane as a helical span at residues 58-78 (LIANLTVADLLYCTLLQPFSV). Residues 79 to 94 (DTYLHLHWRTGATFCQ) lie on the Extracellular side of the membrane. A helical membrane pass occupies residues 95 to 115 (IFGFLLFVSNSVSILTLCLIA). The Cytoplasmic portion of the chain corresponds to 116–144 (LGRYLLIAHPKLFPQVFSAKGIVLALVST). A helical membrane pass occupies residues 145 to 165 (WVVAVASFAPLWPIYILVPVV). The Extracellular portion of the chain corresponds to 166–180 (CTCSFDRIRGQPYTT). Residues 181–201 (ILMGIYFVVGLSSVGVFYCLI) form a helical membrane-spanning segment. The Cytoplasmic segment spans residues 202–320 (HQQVKRAAQA…PSEFGKVTRM (119 aa)). A phosphoserine mark is found at serine 221 and serine 224. A disordered region spans residues 243–310 (SGLASGGPSE…TKGAQRAQDS (68 aa)). Threonine 263 and threonine 264 each carry phosphothreonine. Residues 321-341 (CFAVFLCFTLSYIPFLLLNIL) form a helical membrane-spanning segment. Topologically, residues 342 to 352 (DAKVQAPRVVH) are extracellular. The chain crosses the membrane as a helical span at residues 353 to 373 (MLAANLTWLNGCINPVLYAAM). At 374–396 (NRQFRQAYGSLLRRGPQSFHRFH) the chain is on the cytoplasmic side.

It belongs to the G-protein coupled receptor 1 family. In terms of assembly, interacts with ARRB2 and ARR3. Phosphorylated by a subset of GPR84-activating ligands. Constitutively phosphorylated at Ser-221 and Ser-224 in the absence of 2-HTP. By contrast, Thr-263 and Thr-264 are phosphorylated only following prior cell treatment with 2-HTP.

The protein localises to the cell membrane. G protein-coupled receptor that responds endogenously to dietary fatty acids or nutrient, specifically medium-chain free fatty acid (FFA) with carbon chain lengths of C9 to C14. Capric acid (C10:0), undecanoic acid (C11:0) and lauric acid (C12:0) are the most potent agonists. In immune cells, functions as a pro-inflammatory receptor via 6-OAU and promotes the expression of pro-inflammatory mediators such as TNFalpha, IL-6 and IL-12B as well as stimulating chemotactic responses through activation of signaling mediators AKT, ERK and NF-kappa-B. In addition, triggers increased bacterial adhesion and phagocytosis in macrophages and regulates pro-inflammatory function via enhancing NLRP3 inflammasome activation. Also plays an important role in inflammation by modulating neutrophil functions. Mechanistically, promotes neutrophil chemotaxis, reactive oxygen species (ROS) production and degranulation via LYN-AKT/ERK pathway. To regulate ROS, communicates with the two formyl peptide receptors FPR2 and FPR1 to control the NADPH oxidase activity in neutrophils. In Bos taurus (Bovine), this protein is G-protein coupled receptor 84 (GPR84).